The following is a 227-amino-acid chain: MQLCVALDLPSIEENLSLAKSLKNYDIWLKVGLRSYIRDGKEFLKQIKQINPNFHIFLDLKLYDIPNTMADAAEEIAKLGVEMFNIHASAGKEAMQSVMQRVQKFQNPPLVLAVTVLTSFNEEQFRSIYNDSIENKAKQFAKEAYEAGLDGVVCSVYESDLIKNITSDTFITLTPGIRPFGESAGDQKRVADINLAKEKKVDFIVVGRPIYQANNPAEVVEKILTNL.

Substrate is bound by residues Asp-8, Lys-30, 59–68, Thr-118, Arg-178, Gln-187, Gly-207, and Arg-208; that span reads DLKLYDIPNT. Catalysis depends on Lys-61, which acts as the Proton donor.

The protein belongs to the OMP decarboxylase family. Type 1 subfamily. As to quaternary structure, homodimer.

It catalyses the reaction orotidine 5'-phosphate + H(+) = UMP + CO2. The protein operates within pyrimidine metabolism; UMP biosynthesis via de novo pathway; UMP from orotate: step 2/2. Functionally, catalyzes the decarboxylation of orotidine 5'-monophosphate (OMP) to uridine 5'-monophosphate (UMP). This chain is Orotidine 5'-phosphate decarboxylase, found in Nitratiruptor sp. (strain SB155-2).